A 117-amino-acid chain; its full sequence is Cuticle protein CP1243 (117 aa).

4 tandem repeats follow at residues 1 to 17 (NYGE…LVQF), 26 to 43 (AEIG…HVQF), 67 to 84 (QPYG…NRQF), and 93 to 110 (VLVG…NVQF).

As to expression, calcified shell.

This is Cuticle protein CP1243 from Cancer pagurus (Rock crab).